A 730-amino-acid chain; its full sequence is Elongation factor 2 (730 aa).

In terms of domain architecture, tr-type G spans 19 to 260 (VMIRNIAIIA…MVIRFLPSPI (242 aa)). GTP-binding positions include 28-35 (AHIDHGKT), 94-98 (DTPGH), and 148-151 (NKVD). A Diphthamide modification is found at histidine 596.

It belongs to the TRAFAC class translation factor GTPase superfamily. Classic translation factor GTPase family. EF-G/EF-2 subfamily.

It is found in the cytoplasm. Catalyzes the GTP-dependent ribosomal translocation step during translation elongation. During this step, the ribosome changes from the pre-translocational (PRE) to the post-translocational (POST) state as the newly formed A-site-bound peptidyl-tRNA and P-site-bound deacylated tRNA move to the P and E sites, respectively. Catalyzes the coordinated movement of the two tRNA molecules, the mRNA and conformational changes in the ribosome. The chain is Elongation factor 2 (fusA) from Methanococcoides methylutens.